The sequence spans 240 residues: Protein shisa-5 (240 aa).

Positions 1–28 are cleaved as a signal peptide; sequence MTAPVPAPRILLPLLLLLLLTPPPGARG. Residues 29-105 are Extracellular-facing; the sequence is EVCMASRGLS…RPGYNDPMSG (77 aa). The helical transmembrane segment at 106 to 126 threads the bilayer; it reads FGATLAVGLTIFVLSVVTIII. Topologically, residues 127 to 240 are cytoplasmic; it reads CFTCSCCCLY…AYMDAPKAAL (114 aa).

It belongs to the shisa family. In terms of assembly, interacts with PDCD6; PDCD6 can stabilize SHISA5.

The protein resides in the endoplasmic reticulum membrane. It localises to the nucleus membrane. Functionally, can induce apoptosis in a caspase-dependent manner and plays a role in p53/TP53-dependent apoptosis. This chain is Protein shisa-5 (SHISA5), found in Homo sapiens (Human).